The primary structure comprises 154 residues: RISGIGKAGNPDVQPNVDIVIGPGTEVVAGEGKIVTAGGIDTHIHFICPQQAEEGLCSGLTTFIGGGTGPVAGSNATTVTPGVWNMSRMLEAVDDLPINVGLFGKGCVSKPEALREQIEAGAVGLKLHEDWGATPAAINNCMNVADEMDIQVAI.

The Urease domain maps to G38–I154. Residues H43, H45, and K126 each contribute to the Ni(2+) site. K126 bears the N6-carboxylysine mark. A substrate-binding site is contributed by H128.

The protein belongs to the metallo-dependent hydrolases superfamily. Urease alpha subunit family. In terms of assembly, heterotrimer of UreA (gamma), UreB (beta) and UreC (alpha) subunits. Three heterotrimers associate to form the active enzyme. Requires Ni cation as cofactor. Carboxylation allows a single lysine to coordinate two nickel ions.

The protein localises to the cytoplasm. The catalysed reaction is urea + 2 H2O + H(+) = hydrogencarbonate + 2 NH4(+). It functions in the pathway nitrogen metabolism; urea degradation; CO(2) and NH(3) from urea (urease route): step 1/1. In Photobacterium damselae subsp. damselae (Listonella damsela), this protein is Urease subunit alpha (ureC).